A 732-amino-acid chain; its full sequence is Elongation factor 2 (732 aa).

The 212-residue stretch at 19-230 (ERIRNMGIAA…VSFKDIIDLT (212 aa)) folds into the tr-type G domain. Residues 28-35 (AHIDHGKT), 94-98 (DTPGH), and 148-151 (NKVD) contribute to the GTP site. A Diphthamide modification is found at His597.

It belongs to the TRAFAC class translation factor GTPase superfamily. Classic translation factor GTPase family. EF-G/EF-2 subfamily.

It localises to the cytoplasm. Its function is as follows. Catalyzes the GTP-dependent ribosomal translocation step during translation elongation. During this step, the ribosome changes from the pre-translocational (PRE) to the post-translocational (POST) state as the newly formed A-site-bound peptidyl-tRNA and P-site-bound deacylated tRNA move to the P and E sites, respectively. Catalyzes the coordinated movement of the two tRNA molecules, the mRNA and conformational changes in the ribosome. This is Elongation factor 2 from Thermococcus sibiricus (strain DSM 12597 / MM 739).